We begin with the raw amino-acid sequence, 712 residues long: Protein SDA1 homolog (712 aa).

Threonine 234 bears the Phosphothreonine mark. Serine 236 bears the Phosphoserine mark. Disordered regions lie at residues 488–573 (TIDI…DMRI) and 662–712 (VNEH…KKMK). Acidic residues-rich tracts occupy residues 491-501 (IESEDDTDSND) and 516-559 (GADD…ESGE). Over residues 560–572 (ESAKAKKEKKDMR) the composition is skewed to basic and acidic residues. Basic residues-rich tracts occupy residues 671–692 (REKRKTKNFGMLRHKARSKVKK) and 700–712 (ALRKHLLHQKKMK).

The protein belongs to the SDA1 family.

It localises to the nucleus. The protein resides in the nucleolus. In terms of biological role, required for 60S pre-ribosomal subunits export to the cytoplasm. This is Protein SDA1 homolog (Mys45A) from Drosophila melanogaster (Fruit fly).